The sequence spans 121 residues: Anther-specific protein SF2 (121 aa).

The signal sequence occupies residues 1-21; that stretch reads MANNSVSYLVLLLLVFVLAIS. Asn-115 carries an N-linked (GlcNAc...) asparagine glycan.

Epidermal anther cells.

The protein localises to the secreted. The protein resides in the cell wall. Anther-specific cell wall protein which could contribute to the cell wall architecture of epidermal anther cells via intermolecular disulfide bridges. The sequence is that of Anther-specific protein SF2 from Helianthus annuus (Common sunflower).